Reading from the N-terminus, the 388-residue chain is Myosin light chain kinase family member 4 (388 aa).

Positions Val106–Leu361 constitute a Protein kinase domain. Residues Leu112 to Val120 and Lys135 contribute to the ATP site. The Proton acceptor role is filled by Asp227.

This sequence belongs to the protein kinase superfamily. CAMK Ser/Thr protein kinase family.

It carries out the reaction L-seryl-[protein] + ATP = O-phospho-L-seryl-[protein] + ADP + H(+). The enzyme catalyses L-threonyl-[protein] + ATP = O-phospho-L-threonyl-[protein] + ADP + H(+). This Homo sapiens (Human) protein is Myosin light chain kinase family member 4 (MYLK4).